The chain runs to 129 residues: Small ribosomal subunit protein uS8mz (129 aa).

It belongs to the universal ribosomal protein uS8 family. Component of the mitochondrial ribosome small subunit.

It localises to the mitochondrion. The polypeptide is Small ribosomal subunit protein uS8mz (RPS15AB) (Arabidopsis thaliana (Mouse-ear cress)).